Reading from the N-terminus, the 113-residue chain is Insulin (113 aa).

A signal peptide spans 1 to 24; the sequence is MAALWLQAFSLLVLMMVSWPGSQA. Intrachain disulfides connect C32/C99, C44/C112, and C98/C103. A propeptide spans 56 to 90 (c peptide); sequence DVDPLLGFLPPKAGGAVVQGGENEVTFKDQMEMMV.

Belongs to the insulin family. In terms of assembly, heterodimer of a B chain and an A chain linked by two disulfide bonds.

Its subcellular location is the secreted. Insulin decreases blood glucose concentration. It increases cell permeability to monosaccharides, amino acids and fatty acids. It accelerates glycolysis, the pentose phosphate cycle, and glycogen synthesis in liver. The chain is Insulin (ins) from Oreochromis niloticus (Nile tilapia).